The sequence spans 476 residues: tRNA(Ile)-lysidine synthase (476 aa).

S30 to S35 contributes to the ATP binding site.

The protein belongs to the tRNA(Ile)-lysidine synthase family.

The protein localises to the cytoplasm. It catalyses the reaction cytidine(34) in tRNA(Ile2) + L-lysine + ATP = lysidine(34) in tRNA(Ile2) + AMP + diphosphate + H(+). Functionally, ligates lysine onto the cytidine present at position 34 of the AUA codon-specific tRNA(Ile) that contains the anticodon CAU, in an ATP-dependent manner. Cytidine is converted to lysidine, thus changing the amino acid specificity of the tRNA from methionine to isoleucine. The protein is tRNA(Ile)-lysidine synthase of Bacillus cereus (strain ZK / E33L).